Here is a 199-residue protein sequence, read N- to C-terminus: LIM domain-containing protein E (199 aa).

One can recognise an LIM zinc-binding domain in the interval 5-65 (VKCGACAKTA…PVHTPKVSAT (61 aa)). The interval 134–199 (YAVFGADGQP…EEEQQYEEEQ (66 aa)) is disordered. Low complexity-rich tracts occupy residues 146-155 (EQQEQQQYTE) and 163-174 (EEQQYQEEQQQY). The span at 175–199 (QEEEQQYQEEEQQYQEEEQQYEEEQ) shows a compositional bias: acidic residues.

May interact with rac1A.

The protein resides in the cytoplasm. It localises to the cell cortex. It is found in the nucleus. The protein localises to the cell projection. Its subcellular location is the lamellipodium. The protein resides in the filopodium. It localises to the cytoskeleton. In terms of biological role, associates with the actin cytoskeleton and may regulate actin polymerization in lamellipodia, through a rac1-dependent signaling pathway. May play a role in cell motility. Involved in cytokinesis by regulating the microtubule system and linking it to the cortical actin network. This Dictyostelium discoideum (Social amoeba) protein is LIM domain-containing protein E (limE).